A 395-amino-acid chain; its full sequence is Succinyl-diaminopimelate desuccinylase (395 aa).

Histidine 81 is a Zn(2+) binding site. The active site involves aspartate 83. Zn(2+) is bound at residue aspartate 114. Catalysis depends on glutamate 146, which acts as the Proton acceptor. Positions 147, 175, and 364 each coordinate Zn(2+).

It belongs to the peptidase M20A family. DapE subfamily. As to quaternary structure, homodimer. It depends on Zn(2+) as a cofactor. Co(2+) serves as cofactor.

It carries out the reaction N-succinyl-(2S,6S)-2,6-diaminopimelate + H2O = (2S,6S)-2,6-diaminopimelate + succinate. It functions in the pathway amino-acid biosynthesis; L-lysine biosynthesis via DAP pathway; LL-2,6-diaminopimelate from (S)-tetrahydrodipicolinate (succinylase route): step 3/3. Its function is as follows. Catalyzes the hydrolysis of N-succinyl-L,L-diaminopimelic acid (SDAP), forming succinate and LL-2,6-diaminopimelate (DAP), an intermediate involved in the bacterial biosynthesis of lysine and meso-diaminopimelic acid, an essential component of bacterial cell walls. The chain is Succinyl-diaminopimelate desuccinylase from Parvibaculum lavamentivorans (strain DS-1 / DSM 13023 / NCIMB 13966).